Reading from the N-terminus, the 106-residue chain is Small ribosomal subunit protein uS10 (106 aa).

This sequence belongs to the universal ribosomal protein uS10 family. As to quaternary structure, part of the 30S ribosomal subunit.

In terms of biological role, involved in the binding of tRNA to the ribosomes. The sequence is that of Small ribosomal subunit protein uS10 from Solibacter usitatus (strain Ellin6076).